A 240-amino-acid polypeptide reads, in one-letter code: Aliphatic sulfonates import ATP-binding protein SsuB (240 aa).

Residues 6–227 (IQLSKLRKNF…VKDRHFACFE (222 aa)) form the ABC transporter domain. 38–45 (GESGCGKS) is a binding site for ATP.

The protein belongs to the ABC transporter superfamily. Aliphatic sulfonates importer (TC 3.A.1.17.2) family. In terms of assembly, the complex is composed of two ATP-binding proteins (SsuB), two transmembrane proteins (SsuC) and a solute-binding protein (SsuA).

The protein resides in the cell inner membrane. It catalyses the reaction ATP + H2O + aliphatic sulfonate-[sulfonate-binding protein]Side 1 = ADP + phosphate + aliphatic sulfonateSide 2 + [sulfonate-binding protein]Side 1.. Its function is as follows. Part of the ABC transporter complex SsuABC involved in aliphatic sulfonates import. Responsible for energy coupling to the transport system. This Zymomonas mobilis subsp. mobilis (strain ATCC 31821 / ZM4 / CP4) protein is Aliphatic sulfonates import ATP-binding protein SsuB.